A 345-amino-acid chain; its full sequence is NADH-ubiquinone oxidoreductase chain 2 (345 aa).

A run of 10 helical transmembrane segments spans residues 3–23 (PYIL…TFAS), 25–45 (NWLL…PLMA), 59–79 (YFIT…INAW), 95–115 (ALMT…FWLP), 148–168 (LMPE…GWGG), 177–196 (IMAY…MHFM), 201–223 (IINL…TLNS), 236–256 (FPAL…LPPL), 273–293 (NLAL…YFYL), and 322–342 (FILP…PSII).

It belongs to the complex I subunit 2 family.

Its subcellular location is the mitochondrion inner membrane. The enzyme catalyses a ubiquinone + NADH + 5 H(+)(in) = a ubiquinol + NAD(+) + 4 H(+)(out). Its function is as follows. Core subunit of the mitochondrial membrane respiratory chain NADH dehydrogenase (Complex I) that is believed to belong to the minimal assembly required for catalysis. Complex I functions in the transfer of electrons from NADH to the respiratory chain. The immediate electron acceptor for the enzyme is believed to be ubiquinone. The sequence is that of NADH-ubiquinone oxidoreductase chain 2 (MT-ND2) from Polypterus ornatipinnis (Ornate bichir).